Reading from the N-terminus, the 201-residue chain is 3-isopropylmalate dehydratase small subunit (201 aa).

Belongs to the LeuD family. LeuD type 1 subfamily. Heterodimer of LeuC and LeuD.

It catalyses the reaction (2R,3S)-3-isopropylmalate = (2S)-2-isopropylmalate. It functions in the pathway amino-acid biosynthesis; L-leucine biosynthesis; L-leucine from 3-methyl-2-oxobutanoate: step 2/4. In terms of biological role, catalyzes the isomerization between 2-isopropylmalate and 3-isopropylmalate, via the formation of 2-isopropylmaleate. The sequence is that of 3-isopropylmalate dehydratase small subunit from Methylorubrum extorquens (strain CM4 / NCIMB 13688) (Methylobacterium extorquens).